Reading from the N-terminus, the 480-residue chain is Glutamate--tRNA ligase (480 aa).

The 'HIGH' region motif lies at 8–18 (PSPTGPLHIGG). The short motif at 249–253 (KMSKR) is the 'KMSKS' region element. K252 contributes to the ATP binding site.

It belongs to the class-I aminoacyl-tRNA synthetase family. Glutamate--tRNA ligase type 1 subfamily. As to quaternary structure, monomer.

Its subcellular location is the cytoplasm. It catalyses the reaction tRNA(Glu) + L-glutamate + ATP = L-glutamyl-tRNA(Glu) + AMP + diphosphate. Functionally, catalyzes the attachment of glutamate to tRNA(Glu) in a two-step reaction: glutamate is first activated by ATP to form Glu-AMP and then transferred to the acceptor end of tRNA(Glu). The protein is Glutamate--tRNA ligase of Carboxydothermus hydrogenoformans (strain ATCC BAA-161 / DSM 6008 / Z-2901).